Consider the following 336-residue polypeptide: CMP-sialic acid transporter (336 aa).

Topologically, residues 1-9 (MAQARENVS) are cytoplasmic. Residues 10-30 (LFFKLYCLAVMTLVAAAYTVA) form a helical membrane-spanning segment. Residues 31-45 (LRYTRTTAKELYFST) lie on the Lumenal side of the membrane. A helical transmembrane segment spans residues 46-64 (TAVCVTEVIKLLISVGLLA). Lysine 55 contacts CMP-N-acetyl-beta-neuraminate. At 65 to 87 (KETGSLGRFKASLSENVLGSPKE) the chain is on the cytoplasmic side. Residues 88-108 (LMKLSVPSLVYAVQNNMAFLA) form a helical membrane-spanning segment. Residue 101–102 (QN) participates in CMP-N-acetyl-beta-neuraminate binding. Over 109–114 (LSNLDA) the chain is Lumenal. A helical transmembrane segment spans residues 115–135 (AVYQVTYQLKIPCTALCTVLM). 117–124 (YQVTYQLK) is a binding site for CMP-N-acetyl-beta-neuraminate. Residues 136-141 (LNRTLS) are Cytoplasmic-facing. Residues 142–160 (KLQWVSVFMLCGGVILVQW) form a helical membrane-spanning segment. Residues 161-175 (KPAQATKVVVEQSPL) lie on the Lumenal side of the membrane. A helical membrane pass occupies residues 176–196 (LGFGAIAIAVLCSGFAGVYFE). CMP-N-acetyl-beta-neuraminate is bound at residue serine 188. Over 197 to 209 (KVLKSSDTSLWVR) the chain is Cytoplasmic. Residue 210–214 (NIQMY) coordinates CMP-N-acetyl-beta-neuraminate. The chain crosses the membrane as a helical span at residues 210 to 228 (NIQMYLSGIVVTLVGTYLS). The Lumenal segment spans residues 229 to 243 (DGAEIKEKGFFYGYT). A helical membrane pass occupies residues 244–262 (YYVWFVIFLASVGGLYTSV). At 263–269 (VVKYTDN) the chain is on the cytoplasmic side. Residues 270 to 288 (IMKGFSAAAAIVLSTIASV) traverse the membrane as a helical segment. Lysine 272 provides a ligand contact to CMP-N-acetyl-beta-neuraminate. Topologically, residues 289–296 (MLFGLQIT) are lumenal. The helical transmembrane segment at 297–315 (LSFAMGALLVCISIYLYGL) threads the bilayer. The Cytoplasmic segment spans residues 316–336 (PRQDTTCIQQEATSKERVIGV). The interval 316–336 (PRQDTTCIQQEATSKERVIGV) is disordered.

This sequence belongs to the nucleotide-sugar transporter family. SLC35A subfamily. As to quaternary structure, monomer.

Its subcellular location is the golgi apparatus membrane. The enzyme catalyses CMP-N-acetyl-beta-neuraminate(in) + CMP(out) = CMP-N-acetyl-beta-neuraminate(out) + CMP(in). The catalysed reaction is CMP-N-acetyl-beta-neuraminate(in) + AMP(out) = CMP-N-acetyl-beta-neuraminate(out) + AMP(in). It carries out the reaction CDP-L-ribitol(in) + CDP(out) = CDP-L-ribitol(out) + CDP(in). It catalyses the reaction UMP(out) + CMP-N-acetyl-beta-neuraminate(in) = UMP(in) + CMP-N-acetyl-beta-neuraminate(out). Its function is as follows. Transports CMP-sialic acid from the cytosol into the Golgi apparatus, functioning as an antiporter that exchanges CMP-sialic acid for CMP. Binds both CMP-sialic acid and free CMP, but has higher affinity for free CMP. Also able to exchange CMP-sialic acid for AMP and UMP. Also mediates the transport of CDP-ribitol. This chain is CMP-sialic acid transporter (SLC35A1), found in Cricetulus griseus (Chinese hamster).